A 47-amino-acid polypeptide reads, in one-letter code: MRNDVLTLTNPMEENELEQILGGGNGVLKTISHECNMNTWQFLFTCC.

An N-terminal signal peptide occupies residues 1 to 23 (MRNDVLTLTNPMEENELEQILGG). 2,3-didehydrobutyrine is present on residues threonine 30 and threonine 39. The beta-methyllanthionine (Thr-Cys) cross-link spans 30–35 (TISHEC). The lanthionine (Ser-Cys) cross-link spans 32-46 (SHECNMNTWQFLFTC). The beta-methyllanthionine (Thr-Cys) cross-link spans 45 to 47 (TCC).

It belongs to the type A lantibiotic family. In terms of processing, maturation of lantibiotics involves the enzymatic conversion of Thr, and Ser into dehydrated AA and the formation of thioether bonds with cysteine. This is followed by membrane translocation and cleavage of the modified precursor.

Its subcellular location is the secreted. In terms of biological role, lanthionine-containing peptide antibiotic (lantibiotic) active on Gram-positive bacteria. The bactericidal activity of lantibiotics is based on depolarization of energized bacterial cytoplasmic membranes, initiated by the formation of aqueous transmembrane pores. Ruminococcin A is a broad spectrum bacteriocin exhibiting activity against a wide range of pathogenic clostridia and B.longum. The polypeptide is Ruminococcin-A (rumA1) (Blautia hansenii (Ruminococcus hansenii)).